A 163-amino-acid chain; its full sequence is Endoribonuclease YbeY (163 aa).

Zn(2+) is bound by residues His-129, His-133, and His-139.

It belongs to the endoribonuclease YbeY family. The cofactor is Zn(2+).

The protein localises to the cytoplasm. Functionally, single strand-specific metallo-endoribonuclease involved in late-stage 70S ribosome quality control and in maturation of the 3' terminus of the 16S rRNA. The polypeptide is Endoribonuclease YbeY (Picosynechococcus sp. (strain ATCC 27264 / PCC 7002 / PR-6) (Agmenellum quadruplicatum)).